The chain runs to 263 residues: Adaptin ear-binding coat-associated protein 2 (263 aa).

2 disordered regions span residues 166–194 and 219–263; these read KKKE…PPGG and APSS…WVQF. Residue S181 is modified to Phosphoserine. Short sequence motifs (WXXF motif) lie at residues 240 to 243 and 260 to 263; these read WGDF and WVQF. Residues 246–263 are compositionally biased toward low complexity; sequence STGSTSSQTQPGTGWVQF.

This sequence belongs to the NECAP family. In terms of assembly, interacts with AP1G1 and AP2A1 components of the adapter protein complexes AP-1 and AP-2. Interacts with the GAE domain proteins GGA1, GGA2 and GGA3.

It localises to the cytoplasmic vesicle. The protein resides in the clathrin-coated vesicle membrane. It is found in the cell membrane. In terms of biological role, involved in endocytosis. This chain is Adaptin ear-binding coat-associated protein 2 (NECAP2), found in Homo sapiens (Human).